Consider the following 305-residue polypeptide: Putative lipid kinase USA300HOU_0749 (305 aa).

The DAGKc domain maps to 3-139 (NKYTHGVLFY…YDVIKINNQY (137 aa)). ATP contacts are provided by residues Ser-44, 74–80 (GDGTVNE), and Thr-101. The Mg(2+) site is built by Ser-220, Asp-223, and Glu-225. Catalysis depends on Glu-281, which acts as the Proton acceptor.

Belongs to the diacylglycerol/lipid kinase family. Mg(2+) is required as a cofactor.

In terms of biological role, may catalyze the ATP-dependent phosphorylation of lipids other than diacylglycerol (DAG). This Staphylococcus aureus (strain USA300 / TCH1516) protein is Putative lipid kinase USA300HOU_0749.